A 587-amino-acid polypeptide reads, in one-letter code: Synaptotagmin-3 (587 aa).

Residues 1 to 54 (MSGDYEDDLCRRALILVSDLCARVRDADTNDRCQEFNELRIRGYPRGPDADISV) lie on the Vesicular side of the membrane. The segment at 10–34 (CRRALILVSDLCARVRDADTNDRCQ) is cysteine motif. A helical membrane pass occupies residues 55–75 (SLLSVIVTFCGIVLLGVSLFV). The Cytoplasmic segment spans residues 76-587 (SWKLCWVPWR…KGLSEKENSE (512 aa)). Low complexity predominate over residues 183–205 (PSQTSPELPSEGGTGSGLLLLPP). Residues 183–258 (PSQTSPELPS…EERPPALPLP (76 aa)) are disordered. Residues 213–224 (AQSHQQVTSLAP) show a composition bias toward polar residues. Residues 229–244 (PALPRPLTQQTLTTQA) show a composition bias toward low complexity. Arginine 286 is subject to Omega-N-methylarginine. C2 domains follow at residues 296–417 (PCGR…PLWR) and 428–562 (DLGE…EHWH). Residues aspartate 327, aspartate 333, aspartate 385, phenylalanine 386, aspartate 387, serine 390, aspartate 393, aspartate 459, aspartate 465, aspartate 519, and aspartate 521 each coordinate Ca(2+).

It belongs to the synaptotagmin family. Homodimer; disulfide-linked via the cysteine motif. Can also form heterodimers with SYT6, SYT9 and SYT10. The cofactor is Ca(2+).

It localises to the cell membrane. It is found in the cytoplasmic vesicle. Its subcellular location is the secretory vesicle membrane. Functionally, ca(2+) sensor involved in Ca(2+)-dependent exocytosis of secretory vesicles through Ca(2+) and phospholipid binding to the C2 domain. Ca(2+) induces binding of the C2-domains to phospholipid membranes and to assembled SNARE-complexes; both actions contribute to triggering exocytosis. Plays a role in dendrite formation by melanocytes. The polypeptide is Synaptotagmin-3 (Syt3) (Mus musculus (Mouse)).